A 148-amino-acid chain; its full sequence is Small ribosomal subunit protein eS6 (148 aa).

It belongs to the eukaryotic ribosomal protein eS6 family.

This is Small ribosomal subunit protein eS6 from Pyrobaculum aerophilum (strain ATCC 51768 / DSM 7523 / JCM 9630 / CIP 104966 / NBRC 100827 / IM2).